We begin with the raw amino-acid sequence, 372 residues long: Aminomethyltransferase (372 aa).

It belongs to the GcvT family. As to quaternary structure, the glycine cleavage system is composed of four proteins: P, T, L and H.

It carries out the reaction N(6)-[(R)-S(8)-aminomethyldihydrolipoyl]-L-lysyl-[protein] + (6S)-5,6,7,8-tetrahydrofolate = N(6)-[(R)-dihydrolipoyl]-L-lysyl-[protein] + (6R)-5,10-methylene-5,6,7,8-tetrahydrofolate + NH4(+). In terms of biological role, the glycine cleavage system catalyzes the degradation of glycine. The sequence is that of Aminomethyltransferase from Prochlorococcus marinus (strain NATL1A).